The primary structure comprises 259 residues: ATP synthase subunit a (259 aa).

The next 6 membrane-spanning stretches (helical) occupy residues 37–57, 101–121, 131–151, 157–177, 203–223, and 232–252; these read LSIT…FLFM, YFPA…LGLI, LVVT…LAIV, FIGF…MVPI, VLAI…LMPA, and FELF…CVYI.

Belongs to the ATPase A chain family. In terms of assembly, F-type ATPases have 2 components, CF(1) - the catalytic core - and CF(0) - the membrane proton channel. CF(1) has five subunits: alpha(3), beta(3), gamma(1), delta(1), epsilon(1). CF(0) has three main subunits: a(1), b(2) and c(9-12). The alpha and beta chains form an alternating ring which encloses part of the gamma chain. CF(1) is attached to CF(0) by a central stalk formed by the gamma and epsilon chains, while a peripheral stalk is formed by the delta and b chains.

It localises to the cell inner membrane. In terms of biological role, key component of the proton channel; it plays a direct role in the translocation of protons across the membrane. In Magnetococcus marinus (strain ATCC BAA-1437 / JCM 17883 / MC-1), this protein is ATP synthase subunit a.